Here is a 53-residue protein sequence, read N- to C-terminus: Large ribosomal subunit protein bL33 (53 aa).

It belongs to the bacterial ribosomal protein bL33 family.

This chain is Large ribosomal subunit protein bL33, found in Blochmanniella floridana.